Here is an 82-residue protein sequence, read N- to C-terminus: Sec-independent protein translocase protein TatA (82 aa).

The chain crosses the membrane as a helical span at residues 1–21; it reads MGLSTTHLIIFLVIIVLIFGT.

The protein belongs to the TatA/E family. As to quaternary structure, the Tat system comprises two distinct complexes: a TatABC complex, containing multiple copies of TatA, TatB and TatC subunits, and a separate TatA complex, containing only TatA subunits. Substrates initially bind to the TatABC complex, which probably triggers association of the separate TatA complex to form the active translocon.

Its subcellular location is the cell inner membrane. In terms of biological role, part of the twin-arginine translocation (Tat) system that transports large folded proteins containing a characteristic twin-arginine motif in their signal peptide across membranes. TatA could form the protein-conducting channel of the Tat system. The sequence is that of Sec-independent protein translocase protein TatA from Leptothrix cholodnii (strain ATCC 51168 / LMG 8142 / SP-6) (Leptothrix discophora (strain SP-6)).